The sequence spans 210 residues: Placenta-expressed transcript 1 protein (210 aa).

Residues methionine 1 to cysteine 26 form the signal peptide. The Extracellular segment spans residues threonine 27–phenylalanine 189. N-linked (GlcNAc...) asparagine glycosylation is found at asparagine 67 and asparagine 94. The helical transmembrane segment at arginine 190–leucine 209 threads the bilayer. Residue phenylalanine 210 is a topological domain, cytoplasmic.

Highly expressed in placenta.

The protein localises to the membrane. The protein resides in the apical cell membrane. Its function is as follows. Modulates leading keratinocyte migration and cellular adhesion to matrix proteins during a wound-healing response and promotes wound repair. May play a role during trichilemmal differentiation of the hair follicle. This chain is Placenta-expressed transcript 1 protein (PLET1), found in Sus scrofa (Pig).